The primary structure comprises 326 residues: Cytosolic Fe-S cluster assembly factor NBP35 (326 aa).

The disordered stretch occupies residues 1 to 38 (MTEIANGQQILPPDYTLKEPEPEHCPGPESENAGKGDS). Residues 16–26 (TLKEPEPEHCP) are compositionally biased toward basic and acidic residues. Positions 25, 39, 42, and 48 each coordinate [4Fe-4S] cluster. Position 78-85 (78-85 (GKGGVGKS)) interacts with ATP. The [4Fe-4S] cluster site is built by C251 and C254.

This sequence belongs to the Mrp/NBP35 ATP-binding proteins family. NUBP1/NBP35 subfamily. As to quaternary structure, heterotetramer of 2 NBP35 and 2 CFD1 chains. Requires [4Fe-4S] cluster as cofactor.

The protein localises to the cytoplasm. Its subcellular location is the nucleus. In terms of biological role, component of the cytosolic iron-sulfur (Fe/S) protein assembly (CIA) machinery. Required for maturation of extramitochondrial Fe-S proteins. The NBP35-CFD1 heterotetramer forms a Fe-S scaffold complex, mediating the de novo assembly of an Fe-S cluster and its transfer to target apoproteins. Required for biogenesis and export of both ribosomal subunits, which may reflect a role in assembly of the Fe/S clusters in RLI1, a protein which performs rRNA processing and ribosome export. The polypeptide is Cytosolic Fe-S cluster assembly factor NBP35 (Kluyveromyces lactis (strain ATCC 8585 / CBS 2359 / DSM 70799 / NBRC 1267 / NRRL Y-1140 / WM37) (Yeast)).